The primary structure comprises 57 residues: Large ribosomal subunit protein bL32c (57 aa).

The interval 1–21 (MAVPKKRTSKSKKNLRKNTWK) is disordered.

The protein belongs to the bacterial ribosomal protein bL32 family.

It is found in the plastid. The protein localises to the chloroplast. This Stigeoclonium helveticum (Green alga) protein is Large ribosomal subunit protein bL32c.